Consider the following 272-residue polypeptide: uncharacterized protein (272 aa).

Positions 20-133 constitute an AB hydrolase-1 domain; the sequence is PVLIFIPGAN…PPINTFLPDS (114 aa).

This sequence belongs to the AB hydrolase superfamily.

This is an uncharacterized protein from Staphylococcus aureus (strain MSSA476).